Reading from the N-terminus, the 362-residue chain is NAD(P)H-quinone oxidoreductase subunit 1, chloroplastic (362 aa).

Transmembrane regions (helical) follow at residues 29–49 (ILPI…IVWL), 103–123 (IAVI…HFVL), 128–148 (IGVF…LMAG), 164–184 (AAQS…ISLL), 202–222 (FFGW…ISSL), 247–267 (YSGI…LVSS), 303–323 (TIGI…SITI), and 335–355 (LLNL…LLTT).

It belongs to the complex I subunit 1 family. NDH is composed of at least 16 different subunits, 5 of which are encoded in the nucleus.

Its subcellular location is the plastid. The protein resides in the chloroplast thylakoid membrane. The catalysed reaction is a plastoquinone + NADH + (n+1) H(+)(in) = a plastoquinol + NAD(+) + n H(+)(out). The enzyme catalyses a plastoquinone + NADPH + (n+1) H(+)(in) = a plastoquinol + NADP(+) + n H(+)(out). Functionally, NDH shuttles electrons from NAD(P)H:plastoquinone, via FMN and iron-sulfur (Fe-S) centers, to quinones in the photosynthetic chain and possibly in a chloroplast respiratory chain. The immediate electron acceptor for the enzyme in this species is believed to be plastoquinone. Couples the redox reaction to proton translocation, and thus conserves the redox energy in a proton gradient. This is NAD(P)H-quinone oxidoreductase subunit 1, chloroplastic from Agrostis stolonifera (Creeping bentgrass).